We begin with the raw amino-acid sequence, 425 residues long: MLQHLRNRASIEVLGKAIRKYNVPESANQLLIDMGFIQPSMPGIFQYLPLGLRVQNKICDLLHISMRSLGASAISLAHLSSKEIWEKSGRWQKTGSELFRLHDRNDREMCLAPTHEEDVTRTMATIIDSQKQLPIRVYQIGRKFRDELRPRGGLLRGREFMMKDLYTFDIDKASAMKTYEDVLQAYHTFFKEVGLPFVMVKAATGNIGGNLSHEFHYRHPVGEDVIYTCPSCHYSTNSEMLDLSKTSSDISCPNCNDQLTSTTAIEVGHAFYLGKIYSSKFNATVEVKNKQEVLHMGCYGIGVSRLIAAVAHVTKDAKGLVWPSSIAPWKVLVVPTSDNHIQSAETVYDATANVVGFDNVLLEDRQNRAFGYKMRDAELIGYPFVIVVGSRFQEEGICEIIVRSSGERYKLDKDSLHQVLLGNFL.

This sequence belongs to the class-II aminoacyl-tRNA synthetase family.

The protein localises to the mitochondrion. It catalyses the reaction tRNA(Pro) + L-proline + ATP = L-prolyl-tRNA(Pro) + AMP + diphosphate. This is Probable proline--tRNA ligase, mitochondrial from Schizosaccharomyces pombe (strain 972 / ATCC 24843) (Fission yeast).